We begin with the raw amino-acid sequence, 503 residues long: Carboxyl-terminal PDZ ligand of neuronal nitric oxide synthase protein (503 aa).

The PID domain occupies 26 to 191 (FQHGISFEAK…ESERNSDGSG (166 aa)). Positions 170-212 (HTQQNADGQEDGESERNSDGSGDPGRQLTGAERVSTAAAEETD) are disordered. 4 positions are modified to phosphoserine: Ser-183, Ser-187, Ser-190, and Ser-262. The stretch at 318–359 (AAEAAARLEAQARVHQLLLQNKDMLQHISLLVKQVQELELKL) forms a coiled coil. 4 positions are modified to phosphoserine: Ser-367, Ser-370, Ser-397, and Ser-413. Residues 491 to 503 (QELGDSLDDEIAV) form an interaction with NOS1 region. A PDZ-binding motif is present at residues 501 to 503 (IAV).

In terms of assembly, interacts with the PDZ domain of NOS1 or the second PDZ domain of DLG4 through its C-terminus. Interacts with RASD1 and SYN1, SYN2 and SYN3 via its PID domain. Forms a ternary complex with NOS1 and SYN1. Forms a ternary complex with NOS1 and RASD1.

It localises to the cell projection. The protein resides in the filopodium. The protein localises to the podosome. Functionally, adapter protein involved in neuronal nitric-oxide (NO) synthesis regulation via its association with nNOS/NOS1. The complex formed with NOS1 and synapsins is necessary for specific NO and synapsin functions at a presynaptic level. Mediates an indirect interaction between NOS1 and RASD1 leading to enhance the ability of NOS1 to activate RASD1. Competes with DLG4 for interaction with NOS1, possibly affecting NOS1 activity by regulating the interaction between NOS1 and DLG4. In kidney podocytes, plays a role in podosomes and filopodia formation through CDC42 activation. This is Carboxyl-terminal PDZ ligand of neuronal nitric oxide synthase protein from Mus musculus (Mouse).